The sequence spans 329 residues: N-acetyl-gamma-glutamyl-phosphate reductase (329 aa).

The active site involves cysteine 155.

It belongs to the NAGSA dehydrogenase family. Type 1 subfamily.

Its subcellular location is the cytoplasm. It catalyses the reaction N-acetyl-L-glutamate 5-semialdehyde + phosphate + NADP(+) = N-acetyl-L-glutamyl 5-phosphate + NADPH + H(+). The protein operates within amino-acid biosynthesis; L-arginine biosynthesis; N(2)-acetyl-L-ornithine from L-glutamate: step 3/4. Functionally, catalyzes the NADPH-dependent reduction of N-acetyl-5-glutamyl phosphate to yield N-acetyl-L-glutamate 5-semialdehyde. In Shewanella pealeana (strain ATCC 700345 / ANG-SQ1), this protein is N-acetyl-gamma-glutamyl-phosphate reductase.